Reading from the N-terminus, the 228-residue chain is Ribulose-phosphate 3-epimerase (228 aa).

Serine 9 is a binding site for substrate. Histidine 34, aspartate 36, histidine 68, and aspartate 177 together coordinate a divalent metal cation. Aspartate 36 functions as the Proton acceptor in the catalytic mechanism. Substrate-binding positions include histidine 68, 177–179, and 199–200; these read DGG and GS. Aspartate 177 serves as the catalytic Proton donor.

It belongs to the ribulose-phosphate 3-epimerase family. It depends on a divalent metal cation as a cofactor.

It carries out the reaction D-ribulose 5-phosphate = D-xylulose 5-phosphate. It functions in the pathway carbohydrate degradation. Catalyzes the reversible epimerization of D-ribulose 5-phosphate to D-xylulose 5-phosphate. This chain is Ribulose-phosphate 3-epimerase, found in Buchnera aphidicola subsp. Acyrthosiphon pisum (strain APS) (Acyrthosiphon pisum symbiotic bacterium).